A 670-amino-acid chain; its full sequence is DNA ligase (670 aa).

NAD(+) contacts are provided by residues 33-37, 82-83, and Glu-114; these read DAEYD and SL. Residue Lys-116 is the N6-AMP-lysine intermediate of the active site. Arg-137, Glu-173, Lys-291, and Lys-315 together coordinate NAD(+). The Zn(2+) site is built by Cys-409, Cys-412, Cys-427, and Cys-433. Residues 592 to 670 form the BRCT domain; it reads VQSDRLSGNT…ENALAELLSD (79 aa).

It belongs to the NAD-dependent DNA ligase family. LigA subfamily. It depends on Mg(2+) as a cofactor. The cofactor is Mn(2+).

It carries out the reaction NAD(+) + (deoxyribonucleotide)n-3'-hydroxyl + 5'-phospho-(deoxyribonucleotide)m = (deoxyribonucleotide)n+m + AMP + beta-nicotinamide D-nucleotide.. Functionally, DNA ligase that catalyzes the formation of phosphodiester linkages between 5'-phosphoryl and 3'-hydroxyl groups in double-stranded DNA using NAD as a coenzyme and as the energy source for the reaction. It is essential for DNA replication and repair of damaged DNA. This chain is DNA ligase, found in Idiomarina loihiensis (strain ATCC BAA-735 / DSM 15497 / L2-TR).